The sequence spans 97 residues: Integration host factor subunit alpha (97 aa).

It belongs to the bacterial histone-like protein family. Heterodimer of an alpha and a beta chain.

This protein is one of the two subunits of integration host factor, a specific DNA-binding protein that functions in genetic recombination as well as in transcriptional and translational control. In Colwellia psychrerythraea (strain 34H / ATCC BAA-681) (Vibrio psychroerythus), this protein is Integration host factor subunit alpha.